Consider the following 424-residue polypeptide: Myb family transcription factor RLI1 (424 aa).

The interval 144–165 (RPQKRDSGERTPLPPPSQQQHQ) is disordered. The 61-residue stretch at 238-298 (APSKTRIRWT…HLQKYRIAKY (61 aa)) folds into the HTH myb-type domain. The segment at residues 269–294 (PKGILKLMNSDGLTIYHIKSHLQKYR) is a DNA-binding region (H-T-H motif). Positions 342–347 (LHEQLE) match the LHEQLE motif. The stretch at 342 to 391 (LHEQLEIQRNLQLRIEEQGKRLQKMFEDQLKASRSVMEPQELDDVVAFAA) forms a coiled coil.

Belongs to the MYB-CC family. In terms of assembly, homodimer. Interacts with PHR2 in the nucleus. Interacts with SPX1 and SPX2 in the nucleus; these interactions prevent binding to the promoters of target genes, thus regulating negatively leaf inclination in response to phosphate (Pi) starvation.

It localises to the nucleus. Functionally, transcription factor binding to specific DNA sequences of target genes promoters, such as the motif R1BS 5'-NAKATNCN-3' and the motif P1BS 5'-GNATATNC-3' to trigger their expression. Nitrate-induced component involved in modulating phosphate (Pi) response and homeostasis together with PHR2; activates directly the expression of Pi starvation-induced (PSI) genes upon nitrate disponibility, thus triggering the nitrate-induced phosphate response (NIPR) promoting Pi uptake activity. Involved in the shoot architecture; positively regulates leaf inclination by affecting lamina joint cell elongation via the direct promotion of ILI4/BU1 and BC1 genes expression, especially in response to phosphate (Pi) availability. Regulates both brassinolide (BL) biosynthesis and signaling by directly activating BL-biosynthesis and signaling genes. The polypeptide is Myb family transcription factor RLI1 (Oryza sativa subsp. indica (Rice)).